We begin with the raw amino-acid sequence, 151 residues long: Protein-export protein SecB (151 aa).

This sequence belongs to the SecB family. As to quaternary structure, homotetramer, a dimer of dimers. One homotetramer interacts with 1 SecA dimer.

Its subcellular location is the cytoplasm. Functionally, one of the proteins required for the normal export of preproteins out of the cell cytoplasm. It is a molecular chaperone that binds to a subset of precursor proteins, maintaining them in a translocation-competent state. It also specifically binds to its receptor SecA. In Azoarcus sp. (strain BH72), this protein is Protein-export protein SecB.